The sequence spans 404 residues: Glucose-1-phosphate adenylyltransferase (404 aa).

Alpha-D-glucose 1-phosphate contacts are provided by residues Tyr-99, Gly-164, Glu-179 to Lys-180, and Ser-197.

The protein belongs to the bacterial/plant glucose-1-phosphate adenylyltransferase family.

The enzyme catalyses alpha-D-glucose 1-phosphate + ATP + H(+) = ADP-alpha-D-glucose + diphosphate. The protein operates within capsule biogenesis; capsule polysaccharide biosynthesis. It participates in glycan biosynthesis; glycogen biosynthesis. Functionally, involved in the biosynthesis of ADP-glucose, a building block, required in the biosynthesis of maltose-1-phosphate (M1P) and in the elongation reactions to produce linear alpha-1,4-glucans. Catalyzes the reaction between ATP and alpha-D-glucose 1-phosphate (G1P) to produce pyrophosphate and ADP-Glc. This is Glucose-1-phosphate adenylyltransferase from Mycobacterium marinum (strain ATCC BAA-535 / M).